A 939-amino-acid polypeptide reads, in one-letter code: Collagen-like protein 3 (939 aa).

N-linked (GlcNAc...) asparagine; by host glycans are attached at residues Asn-15, Asn-35, Asn-39, and Asn-82. Residues 84 to 95 (SGSSGPSGPQGP) show a composition bias toward low complexity. 2 disordered regions span residues 84–332 (SGSS…DLGN) and 358–697 (SIKG…KGEA). Collagen-like domains follow at residues 88 to 147 (GPSG…NGDK), 148 to 207 (GNKG…KGDK), 211 to 330 (GNKG…SPDL), 364 to 423 (GDKG…SGAD), 427 to 486 (GDKG…KGEK), 493 to 552 (GESG…KGSK), 564 to 622 (GDKG…KGDV), and 638 to 697 (GDKG…KGEA). Basic and acidic residues-rich tracts occupy residues 96–110 (KGEKGSNGDKGDKGE), 123–182 (DADK…DPGI), 189–230 (DADK…DIGL), 237–260 (DADKGDKGDKGSKGDKGDKGDIGP), 267–288 (DADKGDKGDKGSKGDKGDKGTK), 297–314 (KGDKGDKGDKGIKGDKGE), 360–371 (KGDKGDKGDTGL), 378–416 (DADKGEKGDPGNKGDKGNKGDKGSKGDKGDKGDKGDTGL), 423–491 (DADK…DVGI), 498–527 (DADKGDKGEKGDKGVNGDKGDKGSKGDTGI), 537–552 (KGDKGSKGDKGDKGSK), 560–580 (KGDKGDKGDKGSKGDKGDIGI), and 589–684 (KGDK…DKGD). Asn-788, Asn-820, Asn-858, Asn-919, and Asn-925 each carry an N-linked (GlcNAc...) asparagine; by host glycan. The disordered stretch occupies residues 896-923 (NGETGAPTTDSGTNYGAGGGGGGNGTQG). A compositionally biased stretch (gly residues) spans 910–923 (YGAGGGGGGNGTQG).

Post-translationally, may be hydroxylated on lysine by the viral-encoded procollagen-lysine,2-oxoglutarate 5-dioxygenase.

It is found in the virion. May participate in the formation of a layer of cross-linked glycosylated fibrils at the viral surface thus giving it a hairy-like appearance. This chain is Collagen-like protein 3, found in Acanthamoeba polyphaga (Amoeba).